The sequence spans 1708 residues: Rapamycin-insensitive companion of mTOR (1708 aa).

The interaction with NBN stretch occupies residues 1 to 789 (MAAIGRGRSL…DKANLHALIQ (789 aa)). Phosphoserine occurs at positions 21, 35, and 265. Residue Lys-274 forms a Glycyl lysine isopeptide (Lys-Gly) (interchain with G-Cter in ubiquitin) linkage. The segment at 521 to 570 (LKDTEEALLINLRDSQVLQHKENLEWNWNLIGTILKWPNVNLRNYKDEQL) is ribosome-binding domain. ATP-binding residues include Asn-543, Arg-572, and Arg-576. The tract at residues 1022–1041 (LSLNSESTSSRHNSESESVP) is disordered. Lys-1092 and Lys-1095 each carry N6-acetyllysine. Thr-1103 is modified (phosphothreonine). The segment at 1103 to 1134 (TLPNKKHRSSSDPKGGKLSSESKTSNRRIRTL) is disordered. 3 positions are modified to N6-acetyllysine: Lys-1116, Lys-1119, and Lys-1125. Position 1135 is a phosphothreonine; by RPS6KB1 (Thr-1135). 3 positions are modified to phosphoserine: Ser-1138, Ser-1162, and Ser-1219. Positions 1204–1252 (VVESSTSSHMKIRSQSFNTDTTTSGISSMSSSPSRETVGVDATTMDTDC) are disordered. Positions 1206 to 1221 (ESSTSSHMKIRSQSFN) are enriched in polar residues. Residues 1222–1240 (TDTTTSGISSMSSSPSRET) are compositionally biased toward low complexity. Ser-1235 is subject to Phosphoserine; by GSK3-beta. A Phosphothreonine modification is found at Thr-1271. A phosphoserine mark is found at Ser-1274, Ser-1278, Ser-1282, and Ser-1284. Over residues 1275–1288 (NHLSLSKSNSVSLV) the composition is skewed to low complexity. The tract at residues 1275–1298 (NHLSLSKSNSVSLVPPGSSHTLPR) is disordered. Phosphothreonine is present on Thr-1295. Residues Ser-1302 and Ser-1313 each carry the phosphoserine modification. Thr-1332 is modified (phosphothreonine). A phosphoserine mark is found at Ser-1346 and Ser-1353. At Thr-1376 the chain carries Phosphothreonine. Phosphoserine is present on Ser-1385. Tyr-1386 carries the post-translational modification Phosphotyrosine. A phosphoserine mark is found at Ser-1388, Ser-1396, and Ser-1411. His-1515, Cys-1520, and Cys-1523 together coordinate Zn(2+). A phosphoserine mark is found at Ser-1571, Ser-1574, Ser-1577, and Ser-1591. Cys-1651 serves as a coordination point for Zn(2+). Position 1695 is a phosphothreonine; by GSK3-alpha and GSK3-beta (Thr-1695).

This sequence belongs to the RICTOR family. Component of the mechanistic target of rapamycin complex 2 (mTORC2), consisting in two heterotretramers composed of MTOR, MLST8, RICTOR and MAPKAP1/SIN1. The mTORC2 core complex associates with PRR5/PROTOR1 and/or PRR5L/PROTOR2. Contrary to mTORC1, mTORC2 does not bind to and is not sensitive to FKBP12-rapamycin. Binds directly to MTOR and PRR5 within the TORC2 complex; interaction with MTOR is enhanced by deubiquitination of RICTOR by USP9X. Interaction with MAPKAP1 is not enhanced by RICTOR deubiquitination by USP9X. Interacts with CCDC28B. Interacts with NBN. Interacts with SIK3. Interacts with NCKAP1L. Interacts with kinases GSK3A and GSK3B; the interactions lead to phosphorylation of RICTOR at Thr-1695 which facilitates its FBXW7-mediated ubiquitination and subsequent degradation. Interacts with FBXW7; the interaction is enhanced by GSK3-mediated phosphorylation of Thr-1695 and results in RICTOR ubiquitination and degradation. Interacts with ARMH4 (via cytoplasmic tail); this interaction bridges ARMH4 to the mTORC2 complex and inhibits the mTORC2 kinase activity. Interacts with UBXN2A. Interacts with TSPAN8. As to quaternary structure, (Microbial infection) Interacts with vaccinia virus protein F17; this interaction dysregulates MTOR. Post-translationally, phosphorylated by MTOR; when part of mTORC2. Phosphorylated at Thr-1135 by RPS6KB1 downstream of the mTORC1 complex: phosphorylation of RICTOR inhibits mTORC2 signaling by creating a binding site for 14-3-3 proteins. Phosphorylated at Thr-1695 by GSK3A and GSK3B which facilitates RICTOR ubiquitination and subsequent degradation. Phosphorylated at Ser-1235 by GSK3B in response to endoplasmic stress, inhibiting mTORC2 signaling. In terms of processing, ubiquitinated by the SCF(FBXW7) complex, leading to its degradation by the proteasome. Deubiquitinated by USP9X; deubiquitination stabilizes RICTOR and enhances its binding to MTOR, thus promoting mTORC2 complex assembly. Acetylated by EP300/p300 in response to glucose, leading to activate the mTORC2 complex. Acetylation by BLOC1S1/GCN5L1 in response to hypotoxic stress protects RICTOR against ubiquitination and subsequent degradation by the proteasome.

It localises to the cell membrane. Its subcellular location is the endoplasmic reticulum membrane. It is found in the lysosome membrane. Component of the mechanistic target of rapamycin complex 2 (mTORC2), which transduces signals from growth factors to pathways involved in proliferation, cytoskeletal organization, lipogenesis and anabolic output. In response to growth factors, mTORC2 phosphorylates and activates AGC protein kinase family members, including AKT (AKT1, AKT2 and AKT3), PKC (PRKCA, PRKCB and PRKCE) and SGK1. In contrast to mTORC1, mTORC2 is nutrient-insensitive. Within the mTORC2 complex, RICTOR probably acts as a molecular adapter. RICTOR is responsible for the FKBP12-rapamycin-insensitivity of mTORC2. mTORC2 plays a critical role in AKT1 activation by mediating phosphorylation of different sites depending on the context, such as 'Thr-450', 'Ser-473', 'Ser-477' or 'Thr-479', facilitating the phosphorylation of the activation loop of AKT1 on 'Thr-308' by PDPK1/PDK1 which is a prerequisite for full activation. mTORC2 catalyzes the phosphorylation of SGK1 at 'Ser-422' and of PRKCA on 'Ser-657'. The mTORC2 complex also phosphorylates various proteins involved in insulin signaling, such as FBXW8 and IGF2BP1. mTORC2 acts upstream of Rho GTPases to regulate the actin cytoskeleton, probably by activating one or more Rho-type guanine nucleotide exchange factors. mTORC2 promotes the serum-induced formation of stress-fibers or F-actin. The protein is Rapamycin-insensitive companion of mTOR of Homo sapiens (Human).